Consider the following 461-residue polypeptide: MALSIYNTLTKTKDVFQPLVGNQVRMYVCGMTVYDFCHIGHARVMVAFDVVTRWLRQRGYDVTYVRNITDIDDKIIKRANENGEPFEALVERMIAAMHEDEARLSVLRPDIEPRATGHIAGMHQMIQTLIDKGYAYAPGNGDVYYRVTRFETYGKLSRRKIDELKIGARIEVDEIKEDPLDFVLWKGAKPGEPSWDSPWGKGRPGWHIECSVMSTCCLGETFDIHGGGPDLVFPHHENEIAQSEAATGKQYANAWMHAGAVRVDGEKMSKSLGNFFTIREVLEKYHPEVVRYLLVSSHYRSPINYSEESLKEAKGALERFYNGLKGLPEAAPAGGEAYVERFGVAMDDDFNSPEACAVLFEMIREVNRLRESDVQAAAGLAAQLKQLASVLGVLQLEPEAFLQAGAAGKVDAAEVEALIAARLQARADKNWAESDRIRDQLTAMGVVLEDGKGGTTWRLAE.

A Zn(2+)-binding site is contributed by cysteine 29. Residues 31 to 41 (MTVYDFCHIGH) carry the 'HIGH' region motif. Residues cysteine 210, histidine 235, and glutamate 239 each coordinate Zn(2+). The 'KMSKS' region signature appears at 267–271 (KMSKS). ATP is bound at residue lysine 270.

The protein belongs to the class-I aminoacyl-tRNA synthetase family. Monomer. Zn(2+) is required as a cofactor.

It is found in the cytoplasm. It carries out the reaction tRNA(Cys) + L-cysteine + ATP = L-cysteinyl-tRNA(Cys) + AMP + diphosphate. The polypeptide is Cysteine--tRNA ligase (Ectopseudomonas mendocina (strain ymp) (Pseudomonas mendocina)).